Reading from the N-terminus, the 379-residue chain is ORC1-type DNA replication protein 2 (379 aa).

Residues 69 to 73 (TGKTT), Tyr211, and Arg223 contribute to the ATP site.

This sequence belongs to the CDC6/cdc18 family. In terms of assembly, interacts with MCM. Post-translationally, autophosphorylated on a serine. Phosphorylation is inhibited by binding to MCM. Both single-stranded DNA and double-stranded DNA inhibit the phosphorylation reaction.

In terms of biological role, involved in regulation of DNA replication. Dissociates the MCM complex and inhibits the MCM helicase activity, suggesting that it may function as a helicase loader. Binds to both specific and random double-stranded or single-stranded DNA. This chain is ORC1-type DNA replication protein 2 (cdc6-2), found in Methanothermobacter thermautotrophicus (strain ATCC 29096 / DSM 1053 / JCM 10044 / NBRC 100330 / Delta H) (Methanobacterium thermoautotrophicum).